We begin with the raw amino-acid sequence, 445 residues long: Chromosome partition protein MukF (445 aa).

Positions 212–240 (LDETSGNLRELQDTLNAAGDKLQEQLLRI) are leucine-zipper.

This sequence belongs to the MukF family. Interacts, and probably forms a ternary complex, with MukE and MukB via its C-terminal region. The complex formation is stimulated by calcium or magnesium. It is required for an interaction between MukE and MukB.

Its subcellular location is the cytoplasm. The protein localises to the nucleoid. Functionally, involved in chromosome condensation, segregation and cell cycle progression. May participate in facilitating chromosome segregation by condensation DNA from both sides of a centrally located replisome during cell division. Not required for mini-F plasmid partitioning. Probably acts via its interaction with MukB and MukE. Overexpression results in anucleate cells. It has a calcium binding activity. This is Chromosome partition protein MukF from Mannheimia succiniciproducens (strain KCTC 0769BP / MBEL55E).